The sequence spans 338 residues: Glycerol-3-phosphate dehydrogenase [NAD(P)+] (338 aa).

Serine 11, tryptophan 12, histidine 32, histidine 33, and lysine 109 together coordinate NADPH. Residues lysine 109, glycine 140, and serine 142 each coordinate sn-glycerol 3-phosphate. Residue alanine 144 coordinates NADPH. Residues lysine 195, aspartate 248, serine 258, arginine 259, and asparagine 260 each contribute to the sn-glycerol 3-phosphate site. Lysine 195 functions as the Proton acceptor in the catalytic mechanism. Arginine 259 provides a ligand contact to NADPH. 2 residues coordinate NADPH: valine 283 and glutamate 285.

It belongs to the NAD-dependent glycerol-3-phosphate dehydrogenase family.

Its subcellular location is the cytoplasm. The catalysed reaction is sn-glycerol 3-phosphate + NAD(+) = dihydroxyacetone phosphate + NADH + H(+). It carries out the reaction sn-glycerol 3-phosphate + NADP(+) = dihydroxyacetone phosphate + NADPH + H(+). It participates in membrane lipid metabolism; glycerophospholipid metabolism. Its function is as follows. Catalyzes the reduction of the glycolytic intermediate dihydroxyacetone phosphate (DHAP) to sn-glycerol 3-phosphate (G3P), the key precursor for phospholipid synthesis. In Leuconostoc citreum (strain KM20), this protein is Glycerol-3-phosphate dehydrogenase [NAD(P)+].